Consider the following 599-residue polypeptide: Aspartate--tRNA(Asp/Asn) ligase (599 aa).

Glutamate 172 is a binding site for L-aspartate. The aspartate stretch occupies residues 196–199; sequence QLFK. L-aspartate is bound at residue arginine 218. Residues 218 to 220 and glutamine 227 each bind ATP; that span reads RDE. L-aspartate is bound at residue histidine 451. Glutamate 485 lines the ATP pocket. Arginine 492 serves as a coordination point for L-aspartate. 537 to 540 is a binding site for ATP; the sequence is GLDR.

It belongs to the class-II aminoacyl-tRNA synthetase family. Type 1 subfamily. Homodimer.

The protein resides in the cytoplasm. It catalyses the reaction tRNA(Asx) + L-aspartate + ATP = L-aspartyl-tRNA(Asx) + AMP + diphosphate. In terms of biological role, aspartyl-tRNA synthetase with relaxed tRNA specificity since it is able to aspartylate not only its cognate tRNA(Asp) but also tRNA(Asn). Reaction proceeds in two steps: L-aspartate is first activated by ATP to form Asp-AMP and then transferred to the acceptor end of tRNA(Asp/Asn). The sequence is that of Aspartate--tRNA(Asp/Asn) ligase from Dechloromonas aromatica (strain RCB).